Reading from the N-terminus, the 354-residue chain is Guanine nucleotide-binding protein G(i) subunit alpha-1 (354 aa).

A lipid anchor (N-myristoyl glycine) is attached at G2. C3 carries the S-palmitoyl cysteine lipid modification. Residues 32–354 form the G-alpha domain; sequence REVKLLLLGA…KNNLKDCGLF (323 aa). The interval 35-48 is G1 motif; sequence KLLLLGAGESGKST. GTP-binding positions include 43–48, 150–151, and 175–178; these read ESGKST, DS, and LRTR. Mg(2+) is bound at residue S47. The segment at 173 to 181 is G2 motif; sequence DVLRTRVKT. Residue T181 participates in Mg(2+) binding. Residues 196–205 form a G3 motif region; it reads FKMFDVGGQR. Residues 200–204, 269–272, and A326 each bind GTP; these read DVGGQ and NKKD. The interval 265–272 is G4 motif; it reads ILFLNKKD. Positions 324–329 are G5 motif; sequence TCATDT.

The protein belongs to the G-alpha family. G(i/o/t/z) subfamily. In terms of assembly, heterotrimeric G proteins are composed of 3 units; alpha, beta and gamma. The alpha chain contains the guanine nucleotide binding site. Part of a spindle orientation complex. Identified in complex with the beta subunit GNB1 and the gamma subunit GNG1. Identified in complex with the beta subunit GNB1 and the gamma subunit GNG2. GTP binding causes dissociation of the heterotrimer, liberating the individual subunits so that they can interact with downstream effector proteins. Myristoylation at Gly-2 is required for membrane anchoring before palmitoylation. In terms of processing, palmitoylation at Cys-3 varies with membrane lipid composition.

The protein resides in the nucleus. The protein localises to the cytoplasm. Its subcellular location is the cell membrane. It is found in the cytoskeleton. It localises to the microtubule organizing center. The protein resides in the centrosome. The protein localises to the cell cortex. Its subcellular location is the membrane. The catalysed reaction is GTP + H2O = GDP + phosphate + H(+). In terms of biological role, guanine nucleotide-binding proteins (G proteins) function as transducers downstream of G protein-coupled receptors (GPCRs) in numerous signaling cascades. The alpha chain contains the guanine nucleotide binding site and alternates between an active, GTP-bound state and an inactive, GDP-bound state. Signaling by an activated GPCR promotes GDP release and GTP binding. The alpha subunit has a low GTPase activity that converts bound GTP to GDP, thereby terminating the signal. Both GDP release and GTP hydrolysis are modulated by numerous regulatory proteins. Signaling is mediated via effector proteins, such as adenylate cyclase. Inhibits adenylate cyclase activity, leading to decreased intracellular cAMP levels. Required for cortical dynein-dynactin complex recruitment during metaphase. This Xenopus laevis (African clawed frog) protein is Guanine nucleotide-binding protein G(i) subunit alpha-1 (gnai1).